A 486-amino-acid polypeptide reads, in one-letter code: FAD-dependent oxidoreductase domain-containing protein 1 (486 aa).

The helical transmembrane segment at 66–82 (VVIVGGGVLGLSVAYWL) threads the bilayer.

As to quaternary structure, associates with components of the mitochondrial respiratory chain complex I. The cofactor is FAD.

The protein resides in the mitochondrion inner membrane. Functionally, required for the assembly of the mitochondrial membrane respiratory chain NADH dehydrogenase (Complex I). Involved in mid-late stages of complex I assembly. The polypeptide is FAD-dependent oxidoreductase domain-containing protein 1 (FOXRED1) (Bos taurus (Bovine)).